The following is a 414-amino-acid chain: Probable sugar phosphate/phosphate translocator At1g06470 (414 aa).

9 helical membrane-spanning segments follow: residues 72 to 92 (VLKT…LTLY), 101 to 121 (LGKF…QAVL), 172 to 192 (TFAT…AFAF), 197 to 217 (PSLK…LTVA), 224 to 244 (FWGF…WCMT), 259 to 279 (FIFM…LSLL), 303 to 323 (FLML…YVLV), 328 to 348 (AVTV…VAVF), and 354 to 374 (FTWL…LFNW). The EamA domain maps to 106 to 216 (APLLMNTIHF…VISAGVLLTV (111 aa)).

Belongs to the TPT transporter family. TPT (TC 2.A.7.9) subfamily.

The protein localises to the membrane. The chain is Probable sugar phosphate/phosphate translocator At1g06470 from Arabidopsis thaliana (Mouse-ear cress).